A 428-amino-acid polypeptide reads, in one-letter code: Ammonium transporter AmtB (428 aa).

The N-terminal stretch at 1 to 22 (MKIATIKTGLASLAMLPGLVMA) is a signal peptide. Topologically, residues 23–32 (APAVADKADN) are periplasmic. Residues 33-54 (AFMMICTALVLFMTIPGIALFY) traverse the membrane as a helical segment. Topologically, residues 55–65 (GGLIRGKNVLS) are cytoplasmic. A helical transmembrane segment spans residues 66–90 (MLTQVTVTFALVCILWVVYGYSLAF). The Periplasmic segment spans residues 91-119 (GEGNNFFGNINWLMLKNIELTAVMGSIYQ). A helical transmembrane segment spans residues 120–142 (YIHVAFQGSFACITVGLIVGALA). Residues 143–146 (ERIR) lie on the Cytoplasmic side of the membrane. A helical transmembrane segment spans residues 147 to 171 (FSAVLIFVVVWLTLSYIPIAHMVWG). The Periplasmic segment spans residues 172–185 (GGLLASHGALDFAG). The chain crosses the membrane as a helical span at residues 186 to 201 (GTVVHINAAIAGLVGA). Residues 202–221 (YLIGKRVGFGKEAFKPHNLP) lie on the Cytoplasmic side of the membrane. Residues 222 to 241 (MVFTGTAILYIGWFGFNAGS) form a helical membrane-spanning segment. Serine 241 is a binding site for NH4(+). At 242–248 (AGTANEI) the chain is on the periplasmic side. A helical transmembrane segment spans residues 249 to 273 (AALAFVNTVVATAAAILGWIFGEWA). The Cytoplasmic segment spans residues 274-279 (LRGKPS). A helical membrane pass occupies residues 280–300 (LLGACSGAIAGLVGVTPACGY). Residues 301-302 (IG) are Periplasmic-facing. The helical transmembrane segment at 303–321 (VGGALIIGVVAGLAGLWGV) threads the bilayer. Residues 322–333 (TMLKRLLRVDDP) lie on the Cytoplasmic side of the membrane. The chain crosses the membrane as a helical span at residues 334–355 (CDVFGVHGVCGIVGCIMTGIFA). Over 356-370 (ASSLGGVGFAEGVTM) the chain is Periplasmic. Residues 371-399 (GHQLLVQLESIAITIVWSGVVAFIGYKLA) traverse the membrane as a helical segment. The Cytoplasmic segment spans residues 400 to 428 (DLTVGLRVPEEQEREGLDVNSHGENAYNA).

Belongs to the ammonia transporter channel (TC 1.A.11.2) family. As to quaternary structure, homotrimer. In response to elevation of the extracellular ammonium concentration, interacts and forms a complex with GlnK.

It localises to the cell inner membrane. In the presence of high extracellular ammonium concentrations, transport activity is inhibited by interaction with the regulatory protein GlnK. Formation of the GlnK-AmtB complex is influenced by intracellular pools of the effector molecules ATP, ADP, Mg(2+) and 2-oxoglutarate. The GlnK-AmtB interaction is also controlled by the level of intracellular glutamine and the uridylylation status of GlnK. Its function is as follows. Involved in the uptake of ammonium/ammonia (NH(4)(+)/NH(3)). Transport is electrogenic. Following sequestration of NH(4)(+) at the periplasmic face, NH(4)(+) is deprotonated and neutral NH(3) is transported into the cytoplasm. Neutral NH(3) and charged H(+) are carried separately across the membrane on a unique two-lane pathway, before recombining to NH(4)(+) inside the cell. This Escherichia coli O157:H7 protein is Ammonium transporter AmtB (amtB).